The chain runs to 206 residues: Inner membrane-spanning protein YciB (206 aa).

5 consecutive transmembrane segments (helical) span residues 22–42, 50–70, 76–96, 118–138, and 148–168; these read IYTATGALIVASAVQIILTYF, MQVITFLMVAVFGGMTIFLHD, WKVTIVYALFAIGLTVSHIMG, INWAWTLFFTLCAILNVYVAF, and FKVFGLLIATFAFTLLTGVYI. Residues 178–189 are compositionally biased toward basic and acidic residues; the sequence is LPKDKHQQRDQE. A disordered region spans residues 178–206; the sequence is LPKDKHQQRDQETQNDTQQELSGKNTEEK. Positions 191–206 are enriched in polar residues; that stretch reads QNDTQQELSGKNTEEK.

The protein belongs to the YciB family.

It localises to the cell inner membrane. Functionally, plays a role in cell envelope biogenesis, maintenance of cell envelope integrity and membrane homeostasis. The chain is Inner membrane-spanning protein YciB from Vibrio atlanticus (strain LGP32) (Vibrio splendidus (strain Mel32)).